The chain runs to 344 residues: S-adenosylmethionine:tRNA ribosyltransferase-isomerase (344 aa).

The protein belongs to the QueA family. Monomer.

It is found in the cytoplasm. The enzyme catalyses 7-aminomethyl-7-carbaguanosine(34) in tRNA + S-adenosyl-L-methionine = epoxyqueuosine(34) in tRNA + adenine + L-methionine + 2 H(+). Its pathway is tRNA modification; tRNA-queuosine biosynthesis. Transfers and isomerizes the ribose moiety from AdoMet to the 7-aminomethyl group of 7-deazaguanine (preQ1-tRNA) to give epoxyqueuosine (oQ-tRNA). In Nitrosococcus oceani (strain ATCC 19707 / BCRC 17464 / JCM 30415 / NCIMB 11848 / C-107), this protein is S-adenosylmethionine:tRNA ribosyltransferase-isomerase.